The primary structure comprises 262 residues: Acyl-coenzyme A diphosphatase FITM2 (262 aa).

Over 1–23 the chain is Cytoplasmic; sequence MEHLERCAWVLRGTLVRAAVRRY. Residues 24 to 44 form a helical membrane-spanning segment; sequence LPWALAASMLAGSLLKELSPL. Topologically, residues 45–57 are lumenal; that stretch reads PESYLSNKRNVLN. A helical membrane pass occupies residues 58–78; the sequence is VYFVKVAWAWTFCLLLPFIAL. Over 79–93 the chain is Cytoplasmic; it reads TNYHLTGKAGLVLRR. The helical transmembrane segment at 94–114 threads the bilayer; that stretch reads LSTLLVGTAIWYVCTAIFSNV. Residues 115-145 lie on the Lumenal side of the membrane; the sequence is EHYTGSCYQSPALEGVRNEPLSKQQCHGQGG. The helical transmembrane segment at 146-166 threads the bilayer; sequence FWHGFDISGHSFLLTFCALMI. The active site involves histidine 155. At 167-185 the chain is on the cytoplasmic side; it reads VEEMAVLHEVKTDRSHCLH. A helical transmembrane segment spans residues 186 to 206; the sequence is VAITALVVALGFLTFIWVWMF. The Lumenal portion of the chain corresponds to 207-218; that stretch reads LCTAVYFHNLSQ. Histidine 214 is a catalytic residue. Residues 219–239 form a helical membrane-spanning segment; that stretch reads KVFGTLFGLLGWYGTYGFWYL. Residues 240 to 262 lie on the Cytoplasmic side of the membrane; the sequence is KSFSPGLPPQSCSSNLKQDSYKR.

It belongs to the FIT family. FIT2 subfamily.

The protein resides in the endoplasmic reticulum membrane. The enzyme catalyses an acyl-CoA + H2O = an acyl-4'-phosphopantetheine + adenosine 3',5'-bisphosphate + 2 H(+). It carries out the reaction (9Z)-octadecenoyl-CoA + H2O = S-(9Z-octadecenoyl)-4'-phosphopantetheine + adenosine 3',5'-bisphosphate + 2 H(+). The catalysed reaction is (5Z,8Z,11Z,14Z)-eicosatetraenoyl-CoA + H2O = S-(5Z,8Z,11Z,14Z-eicosatetraenoyl)-4'-phosphopantetheine + adenosine 3',5'-bisphosphate + 2 H(+). It catalyses the reaction hexadecanoyl-CoA + H2O = S-hexadecanoyl-4'-phosphopantetheine + adenosine 3',5'-bisphosphate + 2 H(+). In terms of biological role, fatty acyl-coenzyme A (CoA) diphosphatase that hydrolyzes fatty acyl-CoA to yield acyl-4'-phosphopantetheine and adenosine 3',5'-bisphosphate. Preferentially hydrolyzes unsaturated long-chain acyl-CoA substrates such as oleoyl-CoA/(9Z)-octadecenoyl-CoA and arachidonoyl-CoA/(5Z,8Z,11Z,14Z)-eicosatetraenoyl-CoA in the endoplasmic reticulum (ER) lumen. This catalytic activity is required for maintaining ER structure and for lipid droplets (LDs) biogenesis, which are lipid storage organelles involved in maintaining lipid and energy homeostasis. Directly binds to diacylglycerol (DAGs) and triacylglycerol, which is also important for LD biogenesis. May support directional budding of nacent LDs from the ER into the cytosol by reducing DAG levels at sites of LD formation. Plays a role in the regulation of cell morphology and cytoskeletal organization. The sequence is that of Acyl-coenzyme A diphosphatase FITM2 from Sus scrofa (Pig).